Consider the following 3122-residue polypeptide: DNA polymerase zeta catalytic subunit (3122 aa).

Disordered stretches follow at residues 270–289, 425–457, 487–509, 524–545, and 842–886; these read QRRRNRNESSQISQPESQDC, GYQGEKNRMPLPCHSFGESQNPQNSDDEENEPQ, LCRNAHRSSTEEDDSSSEEEMEW, LDGTADENSDNPLNNENSRAHS, and TSTK…TFEN. The span at 277–286 shows a compositional bias: polar residues; the sequence is ESSQISQPES. Residues 497 to 509 show a composition bias toward acidic residues; the sequence is EEDDSSSEEEMEW. 2 stretches are compositionally biased toward polar residues: residues 533–545 and 842–860; these read DNPLNNENSRAHS and TSTKSTETGATKDSCTHND. Ser1029 is modified (phosphoserine). 7 disordered regions span residues 1034-1075, 1154-1285, 1429-1453, 1538-1616, 1842-1869, 1959-1979, and 2091-2138; these read YPIY…TLSF, VYNT…PTGI, VSVSEQSKTSETCSPGNAASEESQT, KAQS…LSDD, NDVLTPTPDSSPRSTSSPLQSKNGSFTP, NPRPGSPLRNGQAVVNKESSN, and AAVP…RHSS. Residue Thr1040 is modified to Phosphothreonine. Composition is skewed to basic residues over residues 1042–1063 and 1166–1179; these read KKSHRRKSKHKSAKKKPGKQHR and KASRARAQVKKSKA. The segment covering 1215-1239 has biased composition (basic and acidic residues); it reads RANEKSLSRKHAIPADEKMKPHSEA. Residues 1243–1270 are compositionally biased toward polar residues; sequence PNHQSVSELTSSSGAQALSKQKEMSQTG. Positions 1429–1440 are enriched in low complexity; sequence VSVSEQSKTSET. Polar residues-rich tracts occupy residues 1441–1453 and 1538–1561; these read CSPGNAASEESQT and KAQSTNVVQDSTSTHQPDKNISVS. Over residues 1566 to 1587 the composition is skewed to basic residues; it reads KANKRTRPVTSPRKPRTPRRTK. Over residues 1588–1598 the composition is skewed to basic and acidic residues; that stretch reads PKEQTPRRLKV. Over residues 1602–1615 the composition is skewed to polar residues; it reads NLQTSGHLDNSLSD. Residues 1844–1895 form a mediates interaction with MAD2L2 region; the sequence is VLTPTPDSSPRSTSSPLQSKNGSFTPRTAHILKPLMSPPSREEIVATLLDHD. Residues 1846–1859 show a composition bias toward low complexity; the sequence is TPTPDSSPRSTSSP. Polar residues predominate over residues 1860 to 1869; that stretch reads LQSKNGSFTP. Residue Ser1964 is modified to Phosphoserine. The Zn(2+) site is built by Cys3034, Cys3037, Cys3046, and Cys3049. Residues 3034–3049 form a CysA-type zinc finger; sequence CPVCDDLTQHGICSKC. Cys3078, Cys3081, Cys3091, and Cys3096 together coordinate [4Fe-4S] cluster. The short motif at 3078–3096 is the CysB motif element; sequence CRNCTGSFDRHIPCVSLNC.

The protein belongs to the DNA polymerase type-B family. Heterodimer with MAD2L2. This dimer forms the minimal DNA polymerase zeta complex (Pol-zeta2), with REV3L bearing DNA polymerase catalytic activity, although its activity is very low in this context. Component of the tetrameric Pol-zeta complex (Pol-zeta4), which consists of REV3L, MAD2L2, POLD2 and POLD3; Pol-zeta4 is the fully active form of DNA polymerase zeta. [4Fe-4S] cluster is required as a cofactor.

The protein localises to the nucleus. The enzyme catalyses DNA(n) + a 2'-deoxyribonucleoside 5'-triphosphate = DNA(n+1) + diphosphate. Its function is as follows. Catalytic subunit of the DNA polymerase zeta complex, an error-prone polymerase specialized in translesion DNA synthesis (TLS). Lacks an intrinsic 3'-5' exonuclease activity and thus has no proofreading function. This Mus musculus (Mouse) protein is DNA polymerase zeta catalytic subunit (Rev3l).